A 276-amino-acid polypeptide reads, in one-letter code: Secreted RxLR effector protein 120 (276 aa).

The signal sequence occupies residues Met1–Ala21. Positions Gln48–Arg65 match the RxLR-dEER motif. The interval Gly97–Phe130 is disordered. Residues Arg101–Lys119 are compositionally biased toward basic and acidic residues.

It belongs to the RxLR effector family.

It is found in the secreted. The protein resides in the host nucleus. Functionally, secreted effector that completely suppresses the host cell death induced by cell death-inducing proteins. This Plasmopara viticola (Downy mildew of grapevine) protein is Secreted RxLR effector protein 120.